A 414-amino-acid chain; its full sequence is Serine hydroxymethyltransferase (414 aa).

Residues Leu-116 and 120 to 122 contribute to the (6S)-5,6,7,8-tetrahydrofolate site; that span reads GHL. An N6-(pyridoxal phosphate)lysine modification is found at Lys-225. (6S)-5,6,7,8-tetrahydrofolate is bound at residue 349–351; that stretch reads SPF.

It belongs to the SHMT family. As to quaternary structure, homodimer. Pyridoxal 5'-phosphate serves as cofactor.

It is found in the cytoplasm. It catalyses the reaction (6R)-5,10-methylene-5,6,7,8-tetrahydrofolate + glycine + H2O = (6S)-5,6,7,8-tetrahydrofolate + L-serine. It participates in one-carbon metabolism; tetrahydrofolate interconversion. Its pathway is amino-acid biosynthesis; glycine biosynthesis; glycine from L-serine: step 1/1. In terms of biological role, catalyzes the reversible interconversion of serine and glycine with tetrahydrofolate (THF) serving as the one-carbon carrier. This reaction serves as the major source of one-carbon groups required for the biosynthesis of purines, thymidylate, methionine, and other important biomolecules. Also exhibits THF-independent aldolase activity toward beta-hydroxyamino acids, producing glycine and aldehydes, via a retro-aldol mechanism. This is Serine hydroxymethyltransferase from Oenococcus oeni (strain ATCC BAA-331 / PSU-1).